The following is a 214-amino-acid chain: Probable transaldolase (214 aa).

Lys83 (schiff-base intermediate with substrate) is an active-site residue.

Belongs to the transaldolase family. Type 3B subfamily.

It localises to the cytoplasm. The catalysed reaction is D-sedoheptulose 7-phosphate + D-glyceraldehyde 3-phosphate = D-erythrose 4-phosphate + beta-D-fructose 6-phosphate. It participates in carbohydrate degradation; pentose phosphate pathway; D-glyceraldehyde 3-phosphate and beta-D-fructose 6-phosphate from D-ribose 5-phosphate and D-xylulose 5-phosphate (non-oxidative stage): step 2/3. In terms of biological role, transaldolase is important for the balance of metabolites in the pentose-phosphate pathway. The protein is Probable transaldolase of Clostridium botulinum (strain Alaska E43 / Type E3).